The following is a 327-amino-acid chain: Olfactory receptor 226 (327 aa).

At 1–26 (MERRNHSGRVSEFVLLGFPAPAPLRV) the chain is on the extracellular side. N-linked (GlcNAc...) asparagine glycosylation is present at Asn5. A helical transmembrane segment spans residues 27–50 (LLFFLSLLAYVLVLTENMLIIIAI). At 51 to 58 (RNHPTLHK) the chain is on the cytoplasmic side. A helical transmembrane segment spans residues 59-80 (PMYFFLANMSFLEIWYVTVTIP). Over 81-104 (KMLAGFIGSKENHGQLISFEACMT) the chain is Extracellular. Cys102 and Cys194 form a disulfide bridge. A helical membrane pass occupies residues 105-125 (QLYFFLGLGCTECVLLAVMAY). The Cytoplasmic portion of the chain corresponds to 126-144 (DRYVAICHPLHYPVIVSSR). The chain crosses the membrane as a helical span at residues 145 to 163 (LCVQMAAGSWAGGFGISMV). Residues 164-201 (KVFLISRLSYCGPNTINHFFCDVSPLLNLSCTDMSTAE) lie on the Extracellular side of the membrane. A helical transmembrane segment spans residues 202–224 (LTDFVLAIFILLGPLSVTGASYM). Topologically, residues 225 to 241 (AITGAVMRIPSAAGRHK) are cytoplasmic. The helical transmembrane segment at 242 to 265 (AFSTCASHLTVVIIFYAASIFIYA) threads the bilayer. The Extracellular portion of the chain corresponds to 266 to 277 (RPKALSAFDTNK). A helical transmembrane segment spans residues 278 to 297 (LVSVLYAVIVPLFNPIIYCL). Residues 298–327 (RNQDVKRALRRTLHLAQDQEANTNKGSKNG) are Cytoplasmic-facing.

The protein belongs to the G-protein coupled receptor 1 family. In terms of tissue distribution, olfactory epithelium.

Its subcellular location is the cell membrane. Its function is as follows. Odorant receptor. This Rattus norvegicus (Rat) protein is Olfactory receptor 226 (Olr226).